Reading from the N-terminus, the 413-residue chain is Histidine--tRNA ligase (413 aa).

The protein belongs to the class-II aminoacyl-tRNA synthetase family. As to quaternary structure, homodimer.

The protein resides in the cytoplasm. The catalysed reaction is tRNA(His) + L-histidine + ATP = L-histidyl-tRNA(His) + AMP + diphosphate + H(+). The chain is Histidine--tRNA ligase (hisS) from Rickettsia prowazekii (strain Madrid E).